We begin with the raw amino-acid sequence, 355 residues long: NADH dehydrogenase [ubiquinone] 1 alpha subcomplex subunit 10, mitochondrial (355 aa).

Residues 1–35 (MALRLLKLGATSASVRVVAAGAQRVRGIHSSVQCK) constitute a mitochondrion transit peptide. Ser-250 is subject to Phosphoserine; by PINK1. The residue at position 285 (Lys-285) is an N6-succinyllysine.

It belongs to the complex I NDUFA10 subunit family. As to quaternary structure, complex I is composed of 45 different subunits. This a component of the hydrophobic protein fraction. FAD serves as cofactor. In terms of processing, phosphorylation at Ser-250 by PINK1 is required for the binding and/or reduction of the complex I substrate ubiquinone.

Its subcellular location is the mitochondrion matrix. In terms of biological role, accessory subunit of the mitochondrial membrane respiratory chain NADH dehydrogenase (Complex I), that is believed not to be involved in catalysis. Complex I functions in the transfer of electrons from NADH to the respiratory chain. The immediate electron acceptor for the enzyme is believed to be ubiquinone. In Pongo pygmaeus (Bornean orangutan), this protein is NADH dehydrogenase [ubiquinone] 1 alpha subcomplex subunit 10, mitochondrial (NDUFA10).